We begin with the raw amino-acid sequence, 676 residues long: UvrABC system protein B (676 aa).

A Helicase ATP-binding domain is found at 26–414 (EGLENGLAHQ…SDGEIAEQVV (389 aa)). Residue 39 to 46 (GVTGSGKT) coordinates ATP. The Beta-hairpin motif lies at 92–115 (YFDYYQPEAYVPTTDTFIEKDSSV). Residues 432-598 (QVDDLLSEIR…ALKKDVADIL (167 aa)) form the Helicase C-terminal domain. One can recognise a UVR domain in the interval 636-671 (EKAIQKLESKMYQHAKDLEFEQAAQVRDEIDNLRKQ).

The protein belongs to the UvrB family. As to quaternary structure, forms a heterotetramer with UvrA during the search for lesions. Interacts with UvrC in an incision complex.

The protein localises to the cytoplasm. Functionally, the UvrABC repair system catalyzes the recognition and processing of DNA lesions. A damage recognition complex composed of 2 UvrA and 2 UvrB subunits scans DNA for abnormalities. Upon binding of the UvrA(2)B(2) complex to a putative damaged site, the DNA wraps around one UvrB monomer. DNA wrap is dependent on ATP binding by UvrB and probably causes local melting of the DNA helix, facilitating insertion of UvrB beta-hairpin between the DNA strands. Then UvrB probes one DNA strand for the presence of a lesion. If a lesion is found the UvrA subunits dissociate and the UvrB-DNA preincision complex is formed. This complex is subsequently bound by UvrC and the second UvrB is released. If no lesion is found, the DNA wraps around the other UvrB subunit that will check the other stand for damage. The polypeptide is UvrABC system protein B (Aliivibrio fischeri (strain ATCC 700601 / ES114) (Vibrio fischeri)).